We begin with the raw amino-acid sequence, 379 residues long: MATIRKTHPLISIINGAFIDLPAPVNISVWWNFGSLLGLCLITQIVTGLFLAMHFTSDISLAFSSVAHICRDVNYGWFLRNIHANGASLFFICLYLHIARGLYYGSYLYKETWNVGVVLFLLVMMTAFVGYVLPWGQMSFWGATVITNLLSAFPYIGDTLVQWIWGGFSVDNATLTRFFTFHFLFPFVIAGASMIHLLFLHETGSNNPLGLNSNVDKITFHPYFSYKDLLGFIILLAGLMFLTLFSPNLLGDPENFTPANPLVTPPHIKPEWYFLFAYAILRSIPNKLGGVLALLFSILILMIVPITHTSKQRSSTFRPLTQILFWTLVADMFILTWIGGQPVEHPFIIIGQIASIIYFALFLVFAPLAGWVENKMLSW.

Transmembrane regions (helical) follow at residues 33–53 (FGSLLGLCLITQIVTGLFLAM), 77–98 (WFLRNIHANGASLFFICLYLHI), 113–133 (WNVGVVLFLLVMMTAFVGYVL), and 178–198 (FFTFHFLFPFVIAGASMIHLL). Positions 83 and 97 each coordinate heme b. The heme b site is built by His-182 and His-196. His-201 contacts a ubiquinone. 4 helical membrane-spanning segments follow: residues 226–246 (YKDLLGFIILLAGLMFLTLFS), 288–308 (LGGVLALLFSILILMIVPITH), 320–340 (LTQILFWTLVADMFILTWIGG), and 347–367 (FIIIGQIASIIYFALFLVFAP).

This sequence belongs to the cytochrome b family. In terms of assembly, the cytochrome bc1 complex contains 3 respiratory subunits (MT-CYB, CYC1 and UQCRFS1), 2 core proteins (UQCRC1 and UQCRC2) and probably 6 low-molecular weight proteins. It depends on heme b as a cofactor.

It localises to the mitochondrion inner membrane. Component of the ubiquinol-cytochrome c reductase complex (complex III or cytochrome b-c1 complex) that is part of the mitochondrial respiratory chain. The b-c1 complex mediates electron transfer from ubiquinol to cytochrome c. Contributes to the generation of a proton gradient across the mitochondrial membrane that is then used for ATP synthesis. In Amia calva (Bowfin), this protein is Cytochrome b (mt-cyb).